The primary structure comprises 328 residues: D-cysteine desulfhydrase (328 aa).

The residue at position 51 (Lys51) is an N6-(pyridoxal phosphate)lysine.

This sequence belongs to the ACC deaminase/D-cysteine desulfhydrase family. Homodimer. Pyridoxal 5'-phosphate serves as cofactor.

The catalysed reaction is D-cysteine + H2O = hydrogen sulfide + pyruvate + NH4(+) + H(+). In terms of biological role, catalyzes the alpha,beta-elimination reaction of D-cysteine and of several D-cysteine derivatives. It could be a defense mechanism against D-cysteine. This Escherichia coli O157:H7 protein is D-cysteine desulfhydrase.